Here is a 403-residue protein sequence, read N- to C-terminus: Phosphopentomutase (403 aa).

Mn(2+)-binding residues include D13, D298, H303, D339, H340, and H351.

The protein belongs to the phosphopentomutase family. The cofactor is Mn(2+).

The protein resides in the cytoplasm. The catalysed reaction is 2-deoxy-alpha-D-ribose 1-phosphate = 2-deoxy-D-ribose 5-phosphate. It carries out the reaction alpha-D-ribose 1-phosphate = D-ribose 5-phosphate. The protein operates within carbohydrate degradation; 2-deoxy-D-ribose 1-phosphate degradation; D-glyceraldehyde 3-phosphate and acetaldehyde from 2-deoxy-alpha-D-ribose 1-phosphate: step 1/2. Functionally, isomerase that catalyzes the conversion of deoxy-ribose 1-phosphate (dRib-1-P) and ribose 1-phosphate (Rib-1-P) to deoxy-ribose 5-phosphate (dRib-5-P) and ribose 5-phosphate (Rib-5-P), respectively. This is Phosphopentomutase from Streptococcus suis (strain 05ZYH33).